The primary structure comprises 179 residues: ADP-ribosylation factor-like protein 5A (179 aa).

The N-myristoyl glycine moiety is linked to residue Gly-2. GTP-binding positions include 23–30 (GLDNAGKT), 66–70 (DIGGQ), 125–128 (NKQD), and Ala-159.

The protein belongs to the small GTPase superfamily. Arf family.

Functionally, lacks ADP-ribosylation enhancing activity. The chain is ADP-ribosylation factor-like protein 5A (ARL5A) from Homo sapiens (Human).